Consider the following 91-residue polypeptide: Islet amyloid polypeptide (91 aa).

Residues 1 to 22 (MCLLQLPVVLLLLSAALNTLKA) form the signal peptide. Residues 23–34 (TPIASDTDHRVD) constitute a propeptide that is removed on maturation. Cysteine 38 and cysteine 43 are joined by a disulfide. Tyrosine 73 carries the post-translational modification Tyrosine amide. The propeptide occupies 77 to 91 (NAEVVDVELLHYLPL).

This sequence belongs to the calcitonin family. As to quaternary structure, can form homodimers. Interacts with IDE and INS. Interaction with INS inhibits homodimerization and fibril formation.

The protein localises to the secreted. Amylin/IAPP is a glucoregulatory peptide hormone that plays an important role in the regulation of energy homeostasis. Selectively inhibits insulin-stimulated glucose utilization and glycogen deposition in muscle, while not affecting adipocyte glucose metabolism. IAPP function is mediated by the CALCR-RAMPs (AMYRs) receptor complexes. Amylin can also bind CALCR receptor in the absence of RAMPs, although it is more selective for AMYRs. This is Islet amyloid polypeptide (IAPP) from Octodon degus (Degu).